The chain runs to 372 residues: Carbamoyl phosphate synthase small chain (372 aa).

Residues 1-182 (MTLYCKRGYK…PKAPIVHLGN (182 aa)) are CPSase. 3 residues coordinate L-glutamine: Ser53, Gly234, and Gly236. The Glutamine amidotransferase type-1 domain maps to 186-372 (TIVVVDCGVK…KFKKMVSRNA (187 aa)). Cys262 functions as the Nucleophile in the catalytic mechanism. Leu263, Gln266, Asn304, Gly306, and Tyr307 together coordinate L-glutamine. Catalysis depends on residues His347 and Glu349.

The protein belongs to the CarA family. Composed of two chains; the small (or glutamine) chain promotes the hydrolysis of glutamine to ammonia, which is used by the large (or ammonia) chain to synthesize carbamoyl phosphate. Tetramer of heterodimers (alpha,beta)4.

It carries out the reaction hydrogencarbonate + L-glutamine + 2 ATP + H2O = carbamoyl phosphate + L-glutamate + 2 ADP + phosphate + 2 H(+). The catalysed reaction is L-glutamine + H2O = L-glutamate + NH4(+). It participates in amino-acid biosynthesis; L-arginine biosynthesis; carbamoyl phosphate from bicarbonate: step 1/1. The protein operates within pyrimidine metabolism; UMP biosynthesis via de novo pathway; (S)-dihydroorotate from bicarbonate: step 1/3. Functionally, small subunit of the glutamine-dependent carbamoyl phosphate synthetase (CPSase). CPSase catalyzes the formation of carbamoyl phosphate from the ammonia moiety of glutamine, carbonate, and phosphate donated by ATP, constituting the first step of 2 biosynthetic pathways, one leading to arginine and/or urea and the other to pyrimidine nucleotides. The small subunit (glutamine amidotransferase) binds and cleaves glutamine to supply the large subunit with the substrate ammonia. This chain is Carbamoyl phosphate synthase small chain, found in Sulfurisphaera tokodaii (strain DSM 16993 / JCM 10545 / NBRC 100140 / 7) (Sulfolobus tokodaii).